A 1033-amino-acid polypeptide reads, in one-letter code: Tyrosine-protein kinase-like otk (1033 aa).

The N-terminal stretch at 1–22 (MTARMISIYGLVLASMMASVWA) is a signal peptide. The Extracellular segment spans residues 23-581 (SSSRFQRLPQ…GGDGFLVTRA (559 aa)). 5 consecutive Ig-like C2-type domains span residues 25 to 108 (SRFQ…REAS), 109 to 199 (PPAK…RVMS), 251 to 365 (PEDL…LPIS), 368 to 463 (PGVL…VAIN), and 468 to 558 (PKFS…VQLV). Asn39 carries an N-linked (GlcNAc...) asparagine glycan. Cystine bridges form between Cys46–Cys95, Cys137–Cys188, Cys276–Cys354, and Cys399–Cys447. 7 N-linked (GlcNAc...) asparagine glycosylation sites follow: Asn336, Asn417, Asn429, Asn444, Asn457, Asn512, and Asn524. A disulfide bridge links Cys490 with Cys542. The chain crosses the membrane as a helical span at residues 582–602 (VLITMTVALAYIVLVVGLMLW). Residues 603–1033 (CRYRRQARKA…LSKAMQSVEK (431 aa)) are Cytoplasmic-facing. 2 disordered regions span residues 617 to 679 (LSTK…KKSA) and 718 to 760 (SPTD…KTSM). Polar residues predominate over residues 655-673 (KSSGDAQKSDDTACSQQSR). Ser678 carries the post-translational modification Phosphoserine. The region spanning 692 to 1028 (LSELIQIGRG…QLGAALSKAM (337 aa)) is the Protein kinase; inactive domain. A compositionally biased stretch (basic and acidic residues) spans 720–731 (TDKDADTEKQHS).

This sequence belongs to the protein kinase superfamily. Tyr protein kinase family. Insulin receptor subfamily. In terms of assembly, interacts with plexA; component of a receptor complex that mediates the repulsive signaling in response to Semaphorin ligands.

It localises to the cell membrane. Acts as a calcium-dependent, homophilic cell adhesion molecule that regulates neural recognition during the development of the nervous system. Component of the repulsive Plexin signaling response to regulate motor axon guidance at the embryonic stage. Also component of a receptor complex that is required in the adult visual system to innervate the lamina layer; specific targeting of R1-R6 axons. The polypeptide is Tyrosine-protein kinase-like otk (Drosophila erecta (Fruit fly)).